A 147-amino-acid chain; its full sequence is Cytochrome c-type biogenesis protein CcmE (147 aa).

The Cytoplasmic portion of the chain corresponds to 1–9; the sequence is MKSLKKQRR. A helical; Signal-anchor for type II membrane protein transmembrane segment spans residues 10–30; that stretch reads IQIIALATVALVGSTALIGYA. The Periplasmic segment spans residues 31-147; it reads MRDGINYFRS…EQGVYREGDS (117 aa). Residues H123 and Y127 each coordinate heme.

The protein belongs to the CcmE/CycJ family.

The protein resides in the cell inner membrane. In terms of biological role, heme chaperone required for the biogenesis of c-type cytochromes. Transiently binds heme delivered by CcmC and transfers the heme to apo-cytochromes in a process facilitated by CcmF and CcmH. This Ruegeria sp. (strain TM1040) (Silicibacter sp.) protein is Cytochrome c-type biogenesis protein CcmE.